We begin with the raw amino-acid sequence, 66 residues long: Large ribosomal subunit protein bL33c (66 aa).

Belongs to the bacterial ribosomal protein bL33 family.

The protein resides in the plastid. It is found in the chloroplast. This chain is Large ribosomal subunit protein bL33c, found in Lobularia maritima (Sweet alyssum).